The primary structure comprises 101 residues: A-type ATP synthase subunit F (101 aa).

Belongs to the V-ATPase F subunit family. Has multiple subunits with at least A(3), B(3), C, D, E, F, H, I and proteolipid K(x).

It localises to the cell membrane. Its function is as follows. Component of the A-type ATP synthase that produces ATP from ADP in the presence of a proton gradient across the membrane. This is A-type ATP synthase subunit F from Methanosarcina acetivorans (strain ATCC 35395 / DSM 2834 / JCM 12185 / C2A).